The following is a 103-amino-acid chain: Large ribosomal subunit protein bL21 (103 aa).

This sequence belongs to the bacterial ribosomal protein bL21 family. As to quaternary structure, part of the 50S ribosomal subunit. Contacts protein L20.

This protein binds to 23S rRNA in the presence of protein L20. In Shigella sonnei (strain Ss046), this protein is Large ribosomal subunit protein bL21.